Consider the following 574-residue polypeptide: MSNPPHGGVLKDLLARDAPRHDQLETEAEQLPAIVLTERQLCDLELIMNGGFSPLEGFMNQKDYDNVCENVRLADGNLFSMPITLDVSKAVIDESQLKAGSRVTLRDFRDDRNLAILTIDDIYRPDKAREAKLVFGGDKEHPAIKFLNNTVQEFYIGGKVEAINKLNHYDYVALRYTPAELRVHFDKLGWSRVVAFQTRNPMHRAHRELTVRAARARQANVLIHPVVGLTKPGDIDHFTRVRAYQALLPRYPNGMAVLGLLGLAMRMGGPREAIWHAIIRKNHGATHFIVGRDHAGPGKNSKGEEFYGPYDAQHAVEKYREELGIEVVEFQQVTYLPDTDEYKPKDEVPAGVKTLDISGTELRNRLRTGAPIPEWFSYPEVVKILRESSRPRSTQGFTIFLTGYMNSGKDAIARALQVTLNQQGGRSVSLLLGDTVRHELSSELGFSREDRHTNVQRIAFVAGELTRAGAAVIAAPIAPYEESRNAARDAVTQGGGNFFLVHVATPLEYCEKTDKRGIYAKARRGEIKGFTGVDDPYETPSNAHLTVDVSKQTVRSIVHEIILMLETEGFFDRA.

Residues 1–169 form an N-terminal region; sequence MSNPPHGGVL…VEAINKLNHY (169 aa). Residues 170–394 form a catalytic region; that stretch reads DYVALRYTPA…LRESSRPRST (225 aa). Gln-197 serves as a coordination point for sulfate. ATP contacts are provided by residues 197–200 and 291–294; these read QTRN and GRDH. Active-site residues include Thr-198, Arg-199, and Asn-200. Position 199 (Arg-199) interacts with sulfate. Residue Ala-295 coordinates sulfate. Residue Val-333 coordinates ATP. The allosteric regulation domain; adenylyl-sulfate kinase-like stretch occupies residues 395–574; that stretch reads QGFTIFLTGY…LETEGFFDRA (180 aa). 3'-phosphoadenylyl sulfate-binding positions include 434–437, Arg-451, 477–478, and Arg-516; these read DTVR and IA.

This sequence in the N-terminal section; belongs to the sulfate adenylyltransferase family. In the C-terminal section; belongs to the APS kinase family. Homohexamer. Dimer of trimers.

It is found in the cytoplasm. It carries out the reaction sulfate + ATP + H(+) = adenosine 5'-phosphosulfate + diphosphate. It functions in the pathway sulfur metabolism; hydrogen sulfide biosynthesis; sulfite from sulfate: step 1/3. Allosterically inhibited by 3'-phosphoadenosine 5'-phosphosulfate (PAPS). Functionally, catalyzes the first intracellular reaction of sulfate assimilation, forming adenosine-5'-phosphosulfate (APS) from inorganic sulfate and ATP. Plays an important role in sulfate activation as a component of the biosynthesis pathway of sulfur-containing amino acids. In Aspergillus clavatus (strain ATCC 1007 / CBS 513.65 / DSM 816 / NCTC 3887 / NRRL 1 / QM 1276 / 107), this protein is Sulfate adenylyltransferase.